The chain runs to 207 residues: MRPLTARQQEVLDLLKRHLETTGMPPTRAEISRELGFKSANAAEEHLKALSRKGAIEIIPGASRGIRILDNSSNDEFDGLPLVGRVAAGEPILAEQHIEATYRVDADMFKPQADFLLKVYGLSMKNVGILDGDLLAVHSTKDVRNGQIVVARIEDEVTVKRLEKKGSIIYLHAENEEFDPIVVNLEEQKNFEIEGIAVGIIRNNAWM.

A DNA-binding region (H-T-H motif) is located at residues 28 to 48; the sequence is RAEISRELGFKSANAAEEHLK. Catalysis depends on for autocatalytic cleavage activity residues serine 123 and lysine 160.

The protein belongs to the peptidase S24 family. In terms of assembly, homodimer.

It catalyses the reaction Hydrolysis of Ala-|-Gly bond in repressor LexA.. Represses a number of genes involved in the response to DNA damage (SOS response), including recA and lexA. In the presence of single-stranded DNA, RecA interacts with LexA causing an autocatalytic cleavage which disrupts the DNA-binding part of LexA, leading to derepression of the SOS regulon and eventually DNA repair. The chain is LexA repressor from Haemophilus influenzae (strain 86-028NP).